We begin with the raw amino-acid sequence, 370 residues long: Spermidine/putrescine import ATP-binding protein PotA (370 aa).

The 231-residue stretch at 6–236 folds into the ABC transporter domain; it reads IELHQVTKRY…PINHFVADFI (231 aa). An ATP-binding site is contributed by 38–45; sequence GPSGCGKT.

This sequence belongs to the ABC transporter superfamily. Spermidine/putrescine importer (TC 3.A.1.11.1) family. As to quaternary structure, the complex is composed of two ATP-binding proteins (PotA), two transmembrane proteins (PotB and PotC) and a solute-binding protein (PotD).

It is found in the cell membrane. The enzyme catalyses ATP + H2O + polyamine-[polyamine-binding protein]Side 1 = ADP + phosphate + polyamineSide 2 + [polyamine-binding protein]Side 1.. Part of the ABC transporter complex PotABCD involved in spermidine/putrescine import. Responsible for energy coupling to the transport system. The protein is Spermidine/putrescine import ATP-binding protein PotA of Levilactobacillus brevis (strain ATCC 367 / BCRC 12310 / CIP 105137 / JCM 1170 / LMG 11437 / NCIMB 947 / NCTC 947) (Lactobacillus brevis).